Here is a 245-residue protein sequence, read N- to C-terminus: Tryptophan synthase alpha chain (245 aa).

Residues Glu35 and Asp46 each act as proton acceptor in the active site.

It belongs to the TrpA family. In terms of assembly, tetramer of two alpha and two beta chains.

It catalyses the reaction (1S,2R)-1-C-(indol-3-yl)glycerol 3-phosphate + L-serine = D-glyceraldehyde 3-phosphate + L-tryptophan + H2O. Its pathway is amino-acid biosynthesis; L-tryptophan biosynthesis; L-tryptophan from chorismate: step 5/5. Its function is as follows. The alpha subunit is responsible for the aldol cleavage of indoleglycerol phosphate to indole and glyceraldehyde 3-phosphate. This chain is Tryptophan synthase alpha chain, found in Sulfurisphaera tokodaii (strain DSM 16993 / JCM 10545 / NBRC 100140 / 7) (Sulfolobus tokodaii).